Reading from the N-terminus, the 453-residue chain is BPI fold-containing family B member 6 (453 aa).

Residues 1-18 (MLRILCLALCSLLTGTRA) form the signal peptide. N-linked (GlcNAc...) asparagine glycosylation occurs at Asn114. A disulfide bridge links Cys137 with Cys174. Asn190 carries N-linked (GlcNAc...) asparagine glycosylation.

It belongs to the BPI/LBP/Plunc superfamily. BPI/LBP family. Detected at very low levels in normal tonsils, and at higher levels in hypertrophic tonsils.

The protein localises to the secreted. The protein is BPI fold-containing family B member 6 (BPIFB6) of Homo sapiens (Human).